A 222-amino-acid polypeptide reads, in one-letter code: Small ribosomal subunit protein uS3 (222 aa).

The 69-residue stretch at 39–107 (VREFLHKKLA…PVQINIEEVR (69 aa)) folds into the KH type-2 domain.

Belongs to the universal ribosomal protein uS3 family. In terms of assembly, part of the 30S ribosomal subunit. Forms a tight complex with proteins S10 and S14.

Binds the lower part of the 30S subunit head. Binds mRNA in the 70S ribosome, positioning it for translation. The polypeptide is Small ribosomal subunit protein uS3 (Francisella tularensis subsp. tularensis (strain FSC 198)).